The following is a 399-amino-acid chain: CCA-adding enzyme (399 aa).

G33 and R36 together coordinate ATP. Residues G33 and R36 each coordinate CTP. Residues D46 and D48 each coordinate Mg(2+). Residues R117, D160, R163, R166, and R169 each coordinate ATP. 5 residues coordinate CTP: R117, D160, R163, R166, and R169.

The protein belongs to the tRNA nucleotidyltransferase/poly(A) polymerase family. Bacterial CCA-adding enzyme type 3 subfamily. Homodimer. Mg(2+) is required as a cofactor.

The enzyme catalyses a tRNA precursor + 2 CTP + ATP = a tRNA with a 3' CCA end + 3 diphosphate. It carries out the reaction a tRNA with a 3' CCA end + 2 CTP + ATP = a tRNA with a 3' CCACCA end + 3 diphosphate. Its function is as follows. Catalyzes the addition and repair of the essential 3'-terminal CCA sequence in tRNAs without using a nucleic acid template. Adds these three nucleotides in the order of C, C, and A to the tRNA nucleotide-73, using CTP and ATP as substrates and producing inorganic pyrophosphate. tRNA 3'-terminal CCA addition is required both for tRNA processing and repair. Also involved in tRNA surveillance by mediating tandem CCA addition to generate a CCACCA at the 3' terminus of unstable tRNAs. While stable tRNAs receive only 3'-terminal CCA, unstable tRNAs are marked with CCACCA and rapidly degraded. This is CCA-adding enzyme from Lactobacillus helveticus (strain DPC 4571).